The following is a 474-amino-acid chain: tRNA-2-methylthio-N(6)-dimethylallyladenosine synthase (474 aa).

Positions lysine 3–glycine 120 constitute an MTTase N-terminal domain. [4Fe-4S] cluster contacts are provided by cysteine 12, cysteine 49, cysteine 83, cysteine 157, cysteine 161, and cysteine 164. Residues arginine 143 to alanine 375 form the Radical SAM core domain. The TRAM domain maps to arginine 378–arginine 441.

Belongs to the methylthiotransferase family. MiaB subfamily. As to quaternary structure, monomer. [4Fe-4S] cluster is required as a cofactor.

The protein localises to the cytoplasm. It catalyses the reaction N(6)-dimethylallyladenosine(37) in tRNA + (sulfur carrier)-SH + AH2 + 2 S-adenosyl-L-methionine = 2-methylsulfanyl-N(6)-dimethylallyladenosine(37) in tRNA + (sulfur carrier)-H + 5'-deoxyadenosine + L-methionine + A + S-adenosyl-L-homocysteine + 2 H(+). Functionally, catalyzes the methylthiolation of N6-(dimethylallyl)adenosine (i(6)A), leading to the formation of 2-methylthio-N6-(dimethylallyl)adenosine (ms(2)i(6)A) at position 37 in tRNAs that read codons beginning with uridine. This Escherichia coli (strain SMS-3-5 / SECEC) protein is tRNA-2-methylthio-N(6)-dimethylallyladenosine synthase.